The primary structure comprises 228 residues: Small ribosomal subunit protein uS10m (228 aa).

A mitochondrion-targeting transit peptide spans 1 to 17 (MKRYMFGTLPRVQPKRC).

Belongs to the universal ribosomal protein uS10 family. In terms of assembly, component of the mitochondrial small ribosomal subunit (mt-SSU). Mature yeast 74S mitochondrial ribosomes consist of a small (37S) and a large (54S) subunit. The 37S small subunit contains a 15S ribosomal RNA (15S mt-rRNA) and at least 32 different proteins. The 54S large subunit contains a 21S rRNA (21S mt-rRNA) and at least 45 different proteins.

The protein localises to the mitochondrion. Its function is as follows. Component of the mitochondrial ribosome (mitoribosome), a dedicated translation machinery responsible for the synthesis of mitochondrial genome-encoded proteins, including at least some of the essential transmembrane subunits of the mitochondrial respiratory chain. The mitoribosomes are attached to the mitochondrial inner membrane and translation products are cotranslationally integrated into the membrane. The protein is Small ribosomal subunit protein uS10m (rsm10) of Schizosaccharomyces pombe (strain 972 / ATCC 24843) (Fission yeast).